The chain runs to 271 residues: Collectin-11 (271 aa).

A signal peptide spans 1–25 (MVGEKLVAYMLVSVLGLALLRSVFG). Residues 44–103 (GEAGEKGEKGAPGRPGRVGPTGEQGPPGDKGQKGSPGRYGKMGPTGPKGLKGDMGDPGPK) enclose the Collagen-like domain. A disordered region spans residues 46–112 (AGEKGEKGAP…KGPNGEPGVP (67 aa)). The stretch at 124–148 (EMDIQVVQLTNELKFIKNAVAGIKE) forms a coiled coil. Residues 149-265 (TDSKVYLLVK…CQLTMYFVCE (117 aa)) enclose the C-type lectin domain. 2 cysteine pairs are disulfide-bonded: C170-C264 and C242-C256. R200 provides a ligand contact to a carbohydrate. The Ca(2+) site is built by D207, E211, E232, N234, N235, D238, E240, and D241. E240 lines the a carbohydrate pocket. Residues E244 and 252–254 (IDV) each bind a carbohydrate. D253 is a binding site for Ca(2+).

The protein belongs to the COLEC10/COLEC11 family. As to quaternary structure, homotrimer; disulfide-linked. Interacts with MASP1; probably triggers the lectin pathway of complement.

Its subcellular location is the secreted. Functionally, lectin that plays a role in innate immunity, apoptosis and embryogenesis. Calcium-dependent lectin that binds self and non-self glycoproteins presenting high mannose oligosaccharides with at least one terminal alpha-1,2-linked mannose epitope. Primarily recognizes the terminal disaccharide of the glycan. Also recognizes a subset of fucosylated glycans and lipopolysaccharides. Plays a role in innate immunity through its ability to bind non-self sugars presented by microorganisms and to activate the complement through the recruitment of MAPS1. Also plays a role in apoptosis through its ability to bind in a calcium-independent manner the DNA present at the surface of apoptotic cells and to activate the complement in response to this binding. Finally, plays a role in development, probably serving as a guidance cue during the migration of neural crest cells and other cell types during embryogenesis. The sequence is that of Collectin-11 (colec11) from Danio rerio (Zebrafish).